The primary structure comprises 297 residues: 33 kDa chaperonin (297 aa).

2 disulfides stabilise this stretch: Cys232–Cys234 and Cys266–Cys269.

The protein belongs to the HSP33 family. In terms of processing, under oxidizing conditions two disulfide bonds are formed involving the reactive cysteines. Under reducing conditions zinc is bound to the reactive cysteines and the protein is inactive.

The protein resides in the cytoplasm. In terms of biological role, redox regulated molecular chaperone. Protects both thermally unfolding and oxidatively damaged proteins from irreversible aggregation. Plays an important role in the bacterial defense system toward oxidative stress. The protein is 33 kDa chaperonin of Pseudomonas paraeruginosa (strain DSM 24068 / PA7) (Pseudomonas aeruginosa (strain PA7)).